Reading from the N-terminus, the 517-residue chain is Crotonobetaine/carnitine--CoA ligase (517 aa).

Belongs to the ATP-dependent AMP-binding enzyme family.

It carries out the reaction 4-(trimethylamino)butanoate + ATP + CoA = 4-(trimethylamino)butanoyl-CoA + AMP + diphosphate. The catalysed reaction is crotonobetaine + ATP + CoA = crotonobetainyl-CoA + AMP + diphosphate. The enzyme catalyses (R)-carnitine + ATP + CoA = (R)-carnitinyl-CoA + AMP + diphosphate. It functions in the pathway amine and polyamine metabolism; carnitine metabolism. Its function is as follows. Catalyzes the transfer of CoA to carnitine, generating the initial carnitinyl-CoA needed for the CaiB reaction cycle. Also has activity toward crotonobetaine and gamma-butyrobetaine. This Escherichia coli (strain SE11) protein is Crotonobetaine/carnitine--CoA ligase.